A 436-amino-acid chain; its full sequence is Protein TolB homolog (436 aa).

A signal peptide spans methionine 1–alanine 27.

Belongs to the TolB family.

It localises to the periplasm. This is Protein TolB homolog from Chlorobium luteolum (strain DSM 273 / BCRC 81028 / 2530) (Pelodictyon luteolum).